The chain runs to 363 residues: Chorismate synthase (363 aa).

NADP(+) is bound at residue arginine 47. Residues arginine 124–serine 126, glycine 285, lysine 300–threonine 304, and arginine 326 contribute to the FMN site.

The protein belongs to the chorismate synthase family. Homotetramer. It depends on FMNH2 as a cofactor.

It catalyses the reaction 5-O-(1-carboxyvinyl)-3-phosphoshikimate = chorismate + phosphate. The protein operates within metabolic intermediate biosynthesis; chorismate biosynthesis; chorismate from D-erythrose 4-phosphate and phosphoenolpyruvate: step 7/7. Catalyzes the anti-1,4-elimination of the C-3 phosphate and the C-6 proR hydrogen from 5-enolpyruvylshikimate-3-phosphate (EPSP) to yield chorismate, which is the branch point compound that serves as the starting substrate for the three terminal pathways of aromatic amino acid biosynthesis. This reaction introduces a second double bond into the aromatic ring system. The protein is Chorismate synthase of Opitutus terrae (strain DSM 11246 / JCM 15787 / PB90-1).